The sequence spans 31 residues: Phospholipase A2 homolog P-elapitoxin-Aa1a beta chain (31 aa).

The protein belongs to the phospholipase A2 family. Group I subfamily. Heterotrimer of alpha, beta and gamma chains, each related to PLA2. In terms of tissue distribution, expressed by the venom gland.

The protein resides in the secreted. Heterotrimer: Snake venom phospholipase A2 (PLA2) that has presynaptic neurotoxicity. Inhibits nerve-evoked twitch contractions but not responses to cholinergic agonists acetylcholine and carbachol and to depolarizing agonist KCl. Causes a fade in tetanic contractions. Displays a triphasic mode of action with depression, enhancement and blockade of neurotransmission. Does not display myotoxic activity such as changes in baseline muscle tension or inhibition of directly stimulated muscle twitches. All subunits are necessary for maximum toxicity. Functionally, monomer: The beta chain has no enzymatic activity and is not toxic by itself. The polypeptide is Phospholipase A2 homolog P-elapitoxin-Aa1a beta chain (Acanthophis antarcticus (Common death adder)).